A 592-amino-acid chain; its full sequence is Catabolite repression protein creC (592 aa).

Residues 119 to 140 (NSALAAAPVKDPSKKRKPKNNI) form a disordered region. WD repeat units lie at residues 248–288 (INSS…ALFI), 327–368 (LANQ…DVFR), 369–408 (SYYG…IIAR), and 411–455 (GHDS…LHRP). Disordered regions lie at residues 459–513 (HQTS…HPVE) and 556–592 (WDRP…MGSL). Composition is skewed to polar residues over residues 484-499 (SSGN…TAAD) and 564-576 (SDNY…SETL). A WD 5 repeat occupies 529–566 (VGEDPICWLGFQEDTIMTSSLEGHIRTWDRPRENISDN).

This sequence belongs to the WD repeat creC family. As to quaternary structure, interacts with creB.

Component of the regulatory network controlling carbon source utilization through ubiquitination and deubiquitination involving creA, creB, creC, creD and acrB. Required to prevent the proteolysis of the CreB deubiquitinating enzyme in the absence of carbon catabolite repression. CreB deubiquitinating enzyme stabilized in a complex with the CreC leads to the expression of genes such as those in the proline and quinate pathways. The polypeptide is Catabolite repression protein creC (creC) (Emericella nidulans (strain FGSC A4 / ATCC 38163 / CBS 112.46 / NRRL 194 / M139) (Aspergillus nidulans)).